We begin with the raw amino-acid sequence, 224 residues long: Biosynthetic peptidoglycan transglycosylase (224 aa).

The chain crosses the membrane as a helical span at residues 12-32 (ILVVLAILPVFLLLVYSLPFV).

The protein belongs to the glycosyltransferase 51 family.

Its subcellular location is the cell inner membrane. It carries out the reaction [GlcNAc-(1-&gt;4)-Mur2Ac(oyl-L-Ala-gamma-D-Glu-L-Lys-D-Ala-D-Ala)](n)-di-trans,octa-cis-undecaprenyl diphosphate + beta-D-GlcNAc-(1-&gt;4)-Mur2Ac(oyl-L-Ala-gamma-D-Glu-L-Lys-D-Ala-D-Ala)-di-trans,octa-cis-undecaprenyl diphosphate = [GlcNAc-(1-&gt;4)-Mur2Ac(oyl-L-Ala-gamma-D-Glu-L-Lys-D-Ala-D-Ala)](n+1)-di-trans,octa-cis-undecaprenyl diphosphate + di-trans,octa-cis-undecaprenyl diphosphate + H(+). Its pathway is cell wall biogenesis; peptidoglycan biosynthesis. Its function is as follows. Peptidoglycan polymerase that catalyzes glycan chain elongation from lipid-linked precursors. The chain is Biosynthetic peptidoglycan transglycosylase from Brucella suis biovar 1 (strain 1330).